The chain runs to 349 residues: tRNA pseudouridine synthase D (349 aa).

A substrate-binding site is contributed by phenylalanine 27. The active-site Nucleophile is the aspartate 80. Asparagine 129 serves as a coordination point for substrate. Residues 155 to 303 (GVPNYFGAQR…VEAARRAMLL (149 aa)) enclose the TRUD domain. Position 329 (phenylalanine 329) interacts with substrate.

This sequence belongs to the pseudouridine synthase TruD family.

It catalyses the reaction uridine(13) in tRNA = pseudouridine(13) in tRNA. Its function is as follows. Responsible for synthesis of pseudouridine from uracil-13 in transfer RNAs. The chain is tRNA pseudouridine synthase D from Klebsiella pneumoniae (strain 342).